The chain runs to 243 residues: Amphiregulin (243 aa).

An N-terminal signal peptide occupies residues 1-24 (MRTPSLSLALSVLSLLVLGSGHYA). Positions 25–96 (AGLELNGTSS…IVDDSVRVEQ (72 aa)) are excised as a propeptide. Asn-30 carries N-linked (GlcNAc...) asparagine glycosylation. Residues 55–67 (STISEMPSGSELS) are compositionally biased toward polar residues. 2 disordered regions span residues 55-75 (STIS…DYSE) and 98-135 (IKPK…KKKN). Residues 98 to 113 (IKPKENKTEGEKSSEK) show a composition bias toward basic and acidic residues. A glycan (N-linked (GlcNAc...) asparagine) is linked at Asn-103. The segment covering 114–135 (PKRKKKGGKGGKGRRNRKKKKN) has biased composition (basic residues). Positions 133–173 (KKNPCAAKFQNFCIHGECRYIENLEVVTCHCHQDYFGERCG) constitute an EGF-like domain. 3 disulfides stabilise this stretch: Cys-137-Cys-150, Cys-145-Cys-161, and Cys-163-Cys-172. A helical transmembrane segment spans residues 190–213 (IALAAIIVFVSAVSVAAIGIITAV). The N-linked (GlcNAc...) asparagine glycan is linked to Asn-236.

Belongs to the amphiregulin family. As to quaternary structure, the immature precursor interacts with CNIH.

It is found in the membrane. In terms of biological role, ligand of the EGF receptor/EGFR. Autocrine growth factor as well as a mitogen for a broad range of target cells including astrocytes, Schwann cells and fibroblasts. This is Amphiregulin (Areg) from Rattus norvegicus (Rat).